The following is a 151-amino-acid chain: uncharacterized protein (151 aa).

Positions 3-151 (IKIDDLTGRQ…PNSVFMTKKL (149 aa)) constitute an N-acetyltransferase domain.

Belongs to the acetyltransferase family.

This is an uncharacterized protein from Bacillus subtilis (strain 168).